The sequence spans 430 residues: MVTTLRQTDPDFEQKFAAFLSGKREVSEDVDRAVREIVDRVRREGDSALLDYSRRFDRIDLEKTGIAVTEAEIDAAFDAAPASTVEALKLARDRIEKHHARQLPKDDRYTDALGVELGSRWTAIEAVGLYVPGGTASYPSSVLMNAMPAKVAGVDRIVMVVPAPDGNLNPLVLVAARLAGVSEIYRVGGAQAIAALAYGTETIRPVAKIVGPGNAYVAAAKRIVFGTVGIDMIAGPSEVLIVADKDNNPDWIAADLLAQAEHDMAAQSILMTNDEAFAHAVEEAVERQLHTLARTETASASWRDFGAVILVKDFEDAIPLANRIAAEHLEIAVADAEAFVPRIRNAGSIFIGGYTPEVIGDYVGGCNHVLPTARSARFSSGLSVLDYMKRTSLLKLGSEQLRALGPAAIEIARAEGLDAHAQSVAIRLNL.

NAD(+) contacts are provided by Tyr-130, Gln-191, and Asn-214. Positions 237, 259, and 262 each coordinate substrate. Zn(2+)-binding residues include Gln-259 and His-262. Residues Glu-327 and His-328 each act as proton acceptor in the active site. Substrate-binding residues include His-328, Asp-361, Glu-415, and His-420. Asp-361 provides a ligand contact to Zn(2+). His-420 contacts Zn(2+).

This sequence belongs to the histidinol dehydrogenase family. Requires Zn(2+) as cofactor.

The enzyme catalyses L-histidinol + 2 NAD(+) + H2O = L-histidine + 2 NADH + 3 H(+). Its pathway is amino-acid biosynthesis; L-histidine biosynthesis; L-histidine from 5-phospho-alpha-D-ribose 1-diphosphate: step 9/9. Its function is as follows. Catalyzes the sequential NAD-dependent oxidations of L-histidinol to L-histidinaldehyde and then to L-histidine. The polypeptide is Histidinol dehydrogenase (Brucella abortus (strain 2308)).